Reading from the N-terminus, the 207-residue chain is Small ribosomal subunit protein uS4A (207 aa).

In terms of domain architecture, S4 RNA-binding spans 98 to 161 (RRLDNVVYRM…REHKRIKELA (64 aa)).

The protein belongs to the universal ribosomal protein uS4 family. In terms of assembly, part of the 30S ribosomal subunit. Contacts protein S5. The interaction surface between S4 and S5 is involved in control of translational fidelity.

Its function is as follows. One of the primary rRNA binding proteins, it binds directly to 16S rRNA where it nucleates assembly of the body of the 30S subunit. In terms of biological role, with S5 and S12 plays an important role in translational accuracy. The protein is Small ribosomal subunit protein uS4A of Symbiobacterium thermophilum (strain DSM 24528 / JCM 14929 / IAM 14863 / T).